The following is an 87-amino-acid chain: MVNMEASMFLTFAGLVLLFVVCYASESEEKEFPKEMLSSIFAVDNDFKQEERDCAGYMRECKEKLCCSGYVCSSGWKWCVLPAPWRR.

The N-terminal stretch at 1–24 (MVNMEASMFLTFAGLVLLFVVCYA) is a signal peptide. Residues 25-52 (SESEEKEFPKEMLSSIFAVDNDFKQEER) constitute a propeptide that is removed on maturation. Intrachain disulfides connect Cys54–Cys67, Cys61–Cys72, and Cys66–Cys79.

The protein belongs to the neurotoxin 10 (Hwtx-1) family. 51 (Hntx-8) subfamily. Hntx-8 sub-subfamily. As to expression, expressed by the venom gland.

It localises to the secreted. Its function is as follows. Ion channel inhibitor. The polypeptide is U3-theraphotoxin-Hhn1i (Cyriopagopus hainanus (Chinese bird spider)).